The sequence spans 430 residues: Enolase (430 aa).

Gln-165 is a binding site for (2R)-2-phosphoglycerate. The Proton donor role is filled by Glu-207. Residues Asp-244, Glu-287, and Asp-314 each coordinate Mg(2+). Residues Lys-339, Arg-368, Ser-369, and Lys-390 each contribute to the (2R)-2-phosphoglycerate site. The Proton acceptor role is filled by Lys-339.

Belongs to the enolase family. In terms of assembly, component of the RNA degradosome, a multiprotein complex involved in RNA processing and mRNA degradation. Requires Mg(2+) as cofactor.

It localises to the cytoplasm. It is found in the secreted. Its subcellular location is the cell surface. It carries out the reaction (2R)-2-phosphoglycerate = phosphoenolpyruvate + H2O. It participates in carbohydrate degradation; glycolysis; pyruvate from D-glyceraldehyde 3-phosphate: step 4/5. Catalyzes the reversible conversion of 2-phosphoglycerate (2-PG) into phosphoenolpyruvate (PEP). It is essential for the degradation of carbohydrates via glycolysis. This chain is Enolase, found in Xanthomonas oryzae pv. oryzae (strain MAFF 311018).